Consider the following 172-residue polypeptide: C-phycocyanin beta chain (172 aa).

(2R,3E)-phycocyanobilin contacts are provided by residues N35, D39, N72, R77, C82, 82–88 (CLRDMEI), 149–151 (TIG), and C153. Position 72 is an N4-methylasparagine (N72).

It belongs to the phycobiliprotein family. In terms of assembly, heterodimer of an alpha and a beta subunit, which further assembles into trimers and the trimers into hexamers. The basic functional unit of phycobiliproteins is a ring-shaped hexamer formed from two back-to-back trimers contacting via the alpha chain subunits. The trimers are composed of alpha/beta subunit heterodimers arranged around a three-fold axis of symmetry. The phycoerythrins also contain a gamma subunit which is located in the center of the hexamer. Post-translationally, contains two covalently linked phycocyanobilin chromophores.

The protein resides in the plastid. The protein localises to the chloroplast thylakoid membrane. Its function is as follows. Light-harvesting photosynthetic tetrapyrrole chromophore-protein from the phycobiliprotein complex (phycobilisome, PBS). Phycocyanin is the major phycobiliprotein in the PBS rod. The chain is C-phycocyanin beta chain (cpcB) from Cyanidium caldarium (Red alga).